Here is a 432-residue protein sequence, read N- to C-terminus: Tubulin-specific chaperone cofactor E-like protein (432 aa).

7 LRR repeats span residues 69–94, 95–117, 118–140, 143–167, 168–191, 193–217, and 218–242; these read ASHV…ILKN, LPHL…HELP, VSTL…QSFL, LPKV…EPIS, TTVR…NVVK, FPNV…HFEQ, and LPFW…QLNR. The segment at 254–295 is LRRCT; sequence IPLLDALTNEERLHLIIGRLHHLRVLNGSKISSEQREQSERF. The interval 324–415 is ubiquitin-like (UBL); it reads VTIDLTPKKE…GDSFLVQEKI (92 aa).

Its subcellular location is the cytoplasm. It localises to the cytoskeleton. Functionally, acts as a regulator of tubulin stability. Involved in microtubule-dependent neuronal function. May be involved in tubulin acetylation/deacetylation pathway. This chain is Tubulin-specific chaperone cofactor E-like protein, found in Caenorhabditis elegans.